The primary structure comprises 323 residues: Delta-aminolevulinic acid dehydratase (323 aa).

Zn(2+) is bound by residues cysteine 118, cysteine 120, and cysteine 128. Catalysis depends on lysine 195, which acts as the Schiff-base intermediate with substrate. Residues arginine 205 and arginine 217 each coordinate 5-aminolevulinate. Residue glutamate 233 participates in Mg(2+) binding. The active-site Schiff-base intermediate with substrate is lysine 248. Positions 274 and 313 each coordinate 5-aminolevulinate.

Belongs to the ALAD family. In terms of assembly, homooctamer. Zn(2+) serves as cofactor.

It carries out the reaction 2 5-aminolevulinate = porphobilinogen + 2 H2O + H(+). Its pathway is porphyrin-containing compound metabolism; protoporphyrin-IX biosynthesis; coproporphyrinogen-III from 5-aminolevulinate: step 1/4. In terms of biological role, catalyzes an early step in the biosynthesis of tetrapyrroles. Binds two molecules of 5-aminolevulinate per subunit, each at a distinct site, and catalyzes their condensation to form porphobilinogen. This Staphylococcus aureus protein is Delta-aminolevulinic acid dehydratase (hemB).